We begin with the raw amino-acid sequence, 622 residues long: MSASSSDPFHSFAKTSFTSKAAKRATAHSLPPLPGPGDLPPGMNVEYDVAIVGSGPIGCTYARELVEAGFNVAMFEIGEIDSGLKIGSHKKNTVEYQKNIDKFVNVIQGQLMPVSVPVNTMVVDTLSPASWQASTFFVRNGANPEQDPLRNLSGQAVTRVVGGMSTHWTCATPRFEKLQRPLLVKNDSKADDAEWDRLYKKAESYFKTGTTQFAESIRHNLVLKKLQEEYKGVRDFQQIPLAATRQSPTFVEWSSAHTVFDLENRPNKDAPKQRFNLFPAVACTNVRRDNANSEIVGLDVRDLHGGKSITIKAKVYILTAGAVHNAQLLAASGFGQLGRPDPAKPLPSLLPYLGTHITEQTLVFCQTVMSTELINSVTADMTIVGKPGHPDYSVTYTPGNPNNKHPDWWNEKVKKHMMDHQEDPLPIPFEDPEPQVTTLFQATHPWHTQIHRDAFSYGAVQQSIDSRLIVDWRFFGRTEPKEENKLWFSDKITDAYNLRQPTFDFRFPGGREAEDMMTDMCVMSAKIGGFLPGSYPQFMEPGLVLHLGGTHRMGFDEKADKCCVDTDSRVFGFKNLFLGGCGNIPTAYAANPTLTAMSLAIKSCEYIKKNFEPSPNPVKHHN.

Positions 1–28 (MSASSSDPFHSFAKTSFTSKAAKRATAH) are cleaved as a signal peptide. A propeptide spanning residues 29-37 (SLPPLPGPG) is cleaved from the precursor. His-167 carries the post-translational modification Tele-8alpha-FAD histidine. Substrate is bound by residues Gln-449 and His-451. His-546 acts as the Proton acceptor in catalysis. The active site involves Asn-591.

The protein belongs to the GMC oxidoreductase family. As to quaternary structure, homotetramer. FAD is required as a cofactor.

It localises to the periplasm. The catalysed reaction is D-glucose + O2 = 2-dehydro-D-glucose + H2O2. Functionally, catalyzes the oxidation of various aldopyranoses and disaccharides on carbon-2 to the corresponding 2-keto sugars concomitant with the reduction of O(2) to H(2)O(2). Plays an important role in lignin degradation of wood rot fungi by supplying the essential cosubstrate H(2)O(2) for the ligninolytic peroxidases, lignin peroxidase and manganese-dependent peroxidase. The preferred substrate is D-glucose which is converted to 2-dehydro-D-glucose, an intermediate of a secondary metabolic pathway leading to the antibiotic cortalcerone. Also acts on D-xylose, together with D-glucose the major sugars derived from wood, on L-sorbose, D-galactose and 1,5-anhydroglucitol, a diagnostic marker of diabetes mellitus. This is Pyranose 2-oxidase (P2OX) from Trametes hirsuta (White-rot fungus).